A 100-amino-acid chain; its full sequence is Aspartyl/glutamyl-tRNA(Asn/Gln) amidotransferase subunit C (100 aa).

This sequence belongs to the GatC family. In terms of assembly, heterotrimer of A, B and C subunits.

It catalyses the reaction L-glutamyl-tRNA(Gln) + L-glutamine + ATP + H2O = L-glutaminyl-tRNA(Gln) + L-glutamate + ADP + phosphate + H(+). The catalysed reaction is L-aspartyl-tRNA(Asn) + L-glutamine + ATP + H2O = L-asparaginyl-tRNA(Asn) + L-glutamate + ADP + phosphate + 2 H(+). Its function is as follows. Allows the formation of correctly charged Asn-tRNA(Asn) or Gln-tRNA(Gln) through the transamidation of misacylated Asp-tRNA(Asn) or Glu-tRNA(Gln) in organisms which lack either or both of asparaginyl-tRNA or glutaminyl-tRNA synthetases. The reaction takes place in the presence of glutamine and ATP through an activated phospho-Asp-tRNA(Asn) or phospho-Glu-tRNA(Gln). This Streptococcus thermophilus (strain ATCC BAA-491 / LMD-9) protein is Aspartyl/glutamyl-tRNA(Asn/Gln) amidotransferase subunit C.